Reading from the N-terminus, the 91-residue chain is UPF0728 protein v1g117062 (91 aa).

Belongs to the UPF0728 family.

The sequence is that of UPF0728 protein v1g117062 from Nematostella vectensis (Starlet sea anemone).